Reading from the N-terminus, the 228-residue chain is Cytokinin riboside 5'-monophosphate phosphoribohydrolase LOG5 (228 aa).

Substrate-binding positions include Glu-79, 97 to 98 (RK), and 114 to 120 (GYGTLEE).

Belongs to the LOG family. In terms of tissue distribution, expressed in roots and shoots. Detected in vascular tissues of roots, cotyledons, and leaves, axillary buds, immature and mature flowers, fruit abscission zones and ovules.

The protein localises to the cytoplasm. It is found in the nucleus. The enzyme catalyses N(6)-(dimethylallyl)adenosine 5'-phosphate + H2O = N(6)-dimethylallyladenine + D-ribose 5-phosphate. It carries out the reaction 9-ribosyl-trans-zeatin 5'-phosphate + H2O = trans-zeatin + D-ribose 5-phosphate. Functionally, cytokinin-activating enzyme working in the direct activation pathway. Phosphoribohydrolase that converts inactive cytokinin nucleotides to the biologically active free-base forms. The protein is Cytokinin riboside 5'-monophosphate phosphoribohydrolase LOG5 (LOG5) of Arabidopsis thaliana (Mouse-ear cress).